The sequence spans 186 residues: Negative modulator of initiation of replication (186 aa).

This sequence belongs to the SeqA family. As to quaternary structure, homodimer. Polymerizes to form helical filaments.

It is found in the cytoplasm. Functionally, negative regulator of replication initiation, which contributes to regulation of DNA replication and ensures that replication initiation occurs exactly once per chromosome per cell cycle. Binds to pairs of hemimethylated GATC sequences in the oriC region, thus preventing assembly of replication proteins and re-initiation at newly replicated origins. Repression is relieved when the region becomes fully methylated. This chain is Negative modulator of initiation of replication, found in Haemophilus ducreyi (strain 35000HP / ATCC 700724).